Reading from the N-terminus, the 544-residue chain is Chaperonin GroEL 2 (544 aa).

ATP is bound by residues 29-32 (TLGP), K50, 86-90 (DGTTT), G414, and D494.

The protein belongs to the chaperonin (HSP60) family. In terms of assembly, forms a cylinder of 14 subunits composed of two heptameric rings stacked back-to-back. Interacts with the co-chaperonin GroES.

It is found in the cytoplasm. The enzyme catalyses ATP + H2O + a folded polypeptide = ADP + phosphate + an unfolded polypeptide.. In terms of biological role, together with its co-chaperonin GroES, plays an essential role in assisting protein folding. The GroEL-GroES system forms a nano-cage that allows encapsulation of the non-native substrate proteins and provides a physical environment optimized to promote and accelerate protein folding. This chain is Chaperonin GroEL 2, found in Psychromonas ingrahamii (strain DSM 17664 / CCUG 51855 / 37).